The primary structure comprises 156 residues: Large ribosomal subunit protein uL15 (156 aa).

The tract at residues 1–48 (MKLHDLKPTPGSRKDRKRVGRGPGGTDKTAGRGHKGQKSRSGAGKGAF) is disordered.

It belongs to the universal ribosomal protein uL15 family. Part of the 50S ribosomal subunit. Contacts proteins L4, L21 and L35.

Binds to the 23S rRNA. This is Large ribosomal subunit protein uL15 (rplO) from Deinococcus radiodurans (strain ATCC 13939 / DSM 20539 / JCM 16871 / CCUG 27074 / LMG 4051 / NBRC 15346 / NCIMB 9279 / VKM B-1422 / R1).